The chain runs to 321 residues: Cytochrome c biogenesis protein CcsA (321 aa).

7 consecutive transmembrane segments (helical) span residues 17–37, 43–63, 71–91, 143–163, 225–245, 258–273, and 286–306; these read IISIVITIHLVTLLVHEIVGL, KGMIAAFFCITGLLVTRWIYS, LYESLMFLSWSFSIIHMVPKI, MLLSYAALLCGSLLSVALLVI, VISLGFTFLTIGILSGAVWAN, ETWAFITWTIFAIYLH, and AIVASMGFLIIWICYFGVNLL.

This sequence belongs to the CcmF/CycK/Ccl1/NrfE/CcsA family. As to quaternary structure, may interact with Ccs1.

Its subcellular location is the plastid. It localises to the chloroplast thylakoid membrane. In terms of biological role, required during biogenesis of c-type cytochromes (cytochrome c6 and cytochrome f) at the step of heme attachment. This chain is Cytochrome c biogenesis protein CcsA, found in Liriodendron tulipifera (Tuliptree).